The sequence spans 127 residues: Small ribosomal subunit protein bS6 (127 aa).

This sequence belongs to the bacterial ribosomal protein bS6 family.

Binds together with bS18 to 16S ribosomal RNA. This chain is Small ribosomal subunit protein bS6, found in Acinetobacter baumannii (strain AB0057).